We begin with the raw amino-acid sequence, 252 residues long: PF03932 family protein CutC (252 aa).

Belongs to the CutC family.

Its subcellular location is the cytoplasm. This Serratia proteamaculans (strain 568) protein is PF03932 family protein CutC.